We begin with the raw amino-acid sequence, 291 residues long: 5-hydroxytryptamine receptor 1D (291 aa).

Residues 30-54 (LCDIWLSSDITCCTASILHLCVIAL) traverse the membrane as a helical segment. Residues Cys31 and Cys108 are joined by a disulfide bond. Residues Asp38 and Cys42 each coordinate serotonin. Positions 55–57 (DRY) match the DRY motif; important for ligand-induced conformation changes motif. The chain crosses the membrane as a helical span at residues 75-96 (AAAMIAIVWAISICISIPPLFW). A glycan (N-linked (GlcNAc...) asparagine) is linked at Asn111. The next 3 membrane-spanning stretches (helical) occupy residues 115-138 (ISYT…ILYG), 221-246 (KTLG…VLPI), and 256-279 (ALFD…YTVF). Residue Ser241 participates in serotonin binding. The NPxxY motif; important for ligand-induced conformation changes and signaling motif lies at 272 to 276 (NPIIY).

The protein belongs to the G-protein coupled receptor 1 family. In terms of assembly, homodimer. Heterodimer with HTR1B.

It is found in the cell membrane. Functionally, G-protein coupled receptor for 5-hydroxytryptamine (serotonin). Also functions as a receptor for ergot alkaloid derivatives, various anxiolytic and antidepressant drugs and other psychoactive substances. Ligand binding causes a conformation change that triggers signaling via guanine nucleotide-binding proteins (G proteins) and modulates the activity of downstream effectors, such as adenylate cyclase. HTR1D is coupled to G(i)/G(o) G alpha proteins and mediates inhibitory neurotransmission by inhibiting adenylate cyclase activity. Regulates the release of 5-hydroxytryptamine in the brain, and thereby affects neural activity. May also play a role in regulating the release of other neurotransmitters. May play a role in vasoconstriction. The protein is 5-hydroxytryptamine receptor 1D (HTR1D) of Sus scrofa (Pig).